Here is a 636-residue protein sequence, read N- to C-terminus: 1-deoxy-D-xylulose-5-phosphate synthase 2 (636 aa).

Thiamine diphosphate-binding positions include H78 and 119–121 (AHS). D150 provides a ligand contact to Mg(2+). Thiamine diphosphate is bound by residues 151-152 (GS), N179, Y288, and E370. N179 provides a ligand contact to Mg(2+).

This sequence belongs to the transketolase family. DXPS subfamily. Homodimer. Mg(2+) serves as cofactor. Requires thiamine diphosphate as cofactor.

The catalysed reaction is D-glyceraldehyde 3-phosphate + pyruvate + H(+) = 1-deoxy-D-xylulose 5-phosphate + CO2. The protein operates within metabolic intermediate biosynthesis; 1-deoxy-D-xylulose 5-phosphate biosynthesis; 1-deoxy-D-xylulose 5-phosphate from D-glyceraldehyde 3-phosphate and pyruvate: step 1/1. Its function is as follows. Catalyzes the acyloin condensation reaction between C atoms 2 and 3 of pyruvate and glyceraldehyde 3-phosphate to yield 1-deoxy-D-xylulose-5-phosphate (DXP). This Jannaschia sp. (strain CCS1) protein is 1-deoxy-D-xylulose-5-phosphate synthase 2.